The sequence spans 645 residues: 1,4-alpha-glucan branching enzyme GlgB (645 aa).

The Nucleophile role is filled by aspartate 309. The active-site Proton donor is the glutamate 352. The interval 619–645 (VKTRKGSKKQDGSKTKVRSNVTSRGKR) is disordered. Residues 636–645 (RSNVTSRGKR) show a composition bias toward polar residues.

This sequence belongs to the glycosyl hydrolase 13 family. GlgB subfamily. In terms of assembly, monomer.

It catalyses the reaction Transfers a segment of a (1-&gt;4)-alpha-D-glucan chain to a primary hydroxy group in a similar glucan chain.. It functions in the pathway glycan biosynthesis; glycogen biosynthesis. Its function is as follows. Catalyzes the formation of the alpha-1,6-glucosidic linkages in glycogen by scission of a 1,4-alpha-linked oligosaccharide from growing alpha-1,4-glucan chains and the subsequent attachment of the oligosaccharide to the alpha-1,6 position. This chain is 1,4-alpha-glucan branching enzyme GlgB, found in Bacillus cereus (strain G9842).